The primary structure comprises 420 residues: Dynein axonemal assembly factor 4 (420 aa).

Residues 3-87 (VRVSEFSWQQ…KEPVLWESLS (85 aa)) form the CS domain. The segment at 7–103 (EFSWQQTPAA…EMMQRIREKS (97 aa)) is mediates interaction with ESR1 and STUB1. Positions 165–192 (CQKKADGQKRVQRKEKPLQGKQAEERGA) are enriched in basic and acidic residues. The interval 165–212 (CQKKADGQKRVQRKEKPLQGKQAEERGALKPQSLPRKAPPTRLPTRGR) is disordered. TPR repeat units follow at residues 288–321 (PDWL…NRKI), 323–355 (VLYL…LTPP), and 364–397 (MKAH…DPAN).

In terms of assembly, interacts with ZMYND10. Interacts with STUB1. Interacts with ESR1 and ESR2. Interacts with DNAAF2. Interacts with CCT3, CCT4, CCT5 and CCT8. Interacts with DNAAF6/PIH1D3.

The protein resides in the nucleus. The protein localises to the cytoplasm. It localises to the cell projection. Its subcellular location is the neuron projection. It is found in the dynein axonemal particle. Involved in neuronal migration during development of the cerebral neocortex. May regulate the stability and proteasomal degradation of the estrogen receptors that play an important role in neuronal differentiation, survival and plasticity. Axonemal dynein assembly factor required for ciliary motility. This chain is Dynein axonemal assembly factor 4, found in Rattus norvegicus (Rat).